The following is a 513-amino-acid chain: Probable hydrolase YhcX (513 aa).

An N-acetyltransferase domain is found at 14-212 (MVIRNIEEKD…YATLMEWNNV (199 aa)). Residues 229–484 (VRICVIQYEM…EMVVIGDVDL (256 aa)) form the CN hydrolase domain. Glu-270 functions as the Proton acceptor in the catalytic mechanism. Lys-345 (proton donor) is an active-site residue. Residue Cys-379 is the Nucleophile of the active site.

The protein belongs to the carbon-nitrogen hydrolase superfamily. NIT1/NIT2 family.

The sequence is that of Probable hydrolase YhcX (yhcX) from Bacillus subtilis (strain 168).